A 178-amino-acid polypeptide reads, in one-letter code: Peptide deformylase (178 aa).

Cys92 and His134 together coordinate Fe cation. Glu135 is an active-site residue. His138 serves as a coordination point for Fe cation.

This sequence belongs to the polypeptide deformylase family. It depends on Fe(2+) as a cofactor.

The enzyme catalyses N-terminal N-formyl-L-methionyl-[peptide] + H2O = N-terminal L-methionyl-[peptide] + formate. Removes the formyl group from the N-terminal Met of newly synthesized proteins. Requires at least a dipeptide for an efficient rate of reaction. N-terminal L-methionine is a prerequisite for activity but the enzyme has broad specificity at other positions. The protein is Peptide deformylase of Alkalilimnicola ehrlichii (strain ATCC BAA-1101 / DSM 17681 / MLHE-1).